A 198-amino-acid chain; its full sequence is Basic helix-loop-helix transcription factor amos (198 aa).

Residues 76–131 are disordered; it reads EQQQHHLQANPLGKNQGRSPRYWNKQQRSKPYDKLSTSMSSSTSSASSSSSSSAGF. Residues 111–129 show a composition bias toward low complexity; sequence STSMSSSTSSASSSSSSSA. The region spanning 138 to 190 is the bHLH domain; it reads KRRLAANARERRRMNSLNDAFDKLRDVVPSLGHDRRLSKYETLQMAQAYIGDL.

In terms of assembly, efficient DNA binding requires dimerization with another bHLH protein. Interacts with Daughterless (da). In terms of tissue distribution, during embryonic development, expression is seen in a small cluster of ectodermal cells during stage 10 which becomes restricted to 1 cell by stage 11. Expression is lost from this cell in the thorax and then the abdomen. Later expression is restricted to sensory organ precursors. Very transient expression was detected in distal leg disks at approximately 0-4 hours after puparium formation (APF), correlating with the anlage of the innervated tarsal claw.

The protein localises to the nucleus. In terms of biological role, transcription factor involved in early neurogenesis; sensillum basiconica formation and maybe sensillum trichodea development. Promotes multiple dendritic (MD) neuron formation. Required for olfactory sensilla; regulated by lozenge (lz). The protein is Basic helix-loop-helix transcription factor amos (amos) of Drosophila melanogaster (Fruit fly).